The sequence spans 132 residues: Small ribosomal subunit protein uS8 (132 aa).

The protein belongs to the universal ribosomal protein uS8 family. As to quaternary structure, part of the 30S ribosomal subunit. Contacts proteins S5 and S12.

Functionally, one of the primary rRNA binding proteins, it binds directly to 16S rRNA central domain where it helps coordinate assembly of the platform of the 30S subunit. This Lactococcus lactis subsp. lactis (strain IL1403) (Streptococcus lactis) protein is Small ribosomal subunit protein uS8.